The chain runs to 522 residues: Tetratricopeptide repeat protein 39C (522 aa).

3 TPR repeats span residues 254 to 287 (SLFM…AVDQ), 292 to 325 (HVCL…SRWS), and 424 to 457 (GLKH…ESCR).

The protein belongs to the TTC39 family.

This Rattus norvegicus (Rat) protein is Tetratricopeptide repeat protein 39C (Ttc39c).